The chain runs to 635 residues: Chaperone protein HtpG (635 aa).

An a; substrate-binding region spans residues 1 to 346 (MSQTTTNSAS…SADLPLNVSR (346 aa)). The interval 347-563 (EILQESRDVR…QNELSPHLLR (217 aa)) is b. Residues 564–635 (MLKAAGQEAP…KRLNGLLLKA (72 aa)) are c.

The protein belongs to the heat shock protein 90 family. In terms of assembly, homodimer.

It localises to the cytoplasm. In terms of biological role, molecular chaperone. Has ATPase activity. The sequence is that of Chaperone protein HtpG from Bordetella parapertussis (strain 12822 / ATCC BAA-587 / NCTC 13253).